A 179-amino-acid polypeptide reads, in one-letter code: Large ribosomal subunit protein uL5 (179 aa).

The protein belongs to the universal ribosomal protein uL5 family. Part of the 50S ribosomal subunit; part of the 5S rRNA/L5/L18/L25 subcomplex. Contacts the 5S rRNA and the P site tRNA. Forms a bridge to the 30S subunit in the 70S ribosome.

In terms of biological role, this is one of the proteins that bind and probably mediate the attachment of the 5S RNA into the large ribosomal subunit, where it forms part of the central protuberance. In the 70S ribosome it contacts protein S13 of the 30S subunit (bridge B1b), connecting the 2 subunits; this bridge is implicated in subunit movement. Contacts the P site tRNA; the 5S rRNA and some of its associated proteins might help stabilize positioning of ribosome-bound tRNAs. The sequence is that of Large ribosomal subunit protein uL5 from Marinomonas sp. (strain MWYL1).